Here is a 222-residue protein sequence, read N- to C-terminus: MPSLHVFYGGTFDPVHVGHLAIARAAHAALQAPIALIPSADPPHRPTPGSSSMDRLRMLQLAVSKEPGLSADPRELQRAARQNRSSYTVDTLTEVRSELGPKTSIIWLLGADAFVNLSNWKDWQMLPELTHLVIANRPGITLQTQLPPKMATVFNHRWVQDPATLRKTPHGHLWLLNQHPNPSSASKVRAAISAAAHWEADLTPEVAQYIRTHGLYGIHDIN.

Belongs to the NadD family.

It catalyses the reaction nicotinate beta-D-ribonucleotide + ATP + H(+) = deamido-NAD(+) + diphosphate. The protein operates within cofactor biosynthesis; NAD(+) biosynthesis; deamido-NAD(+) from nicotinate D-ribonucleotide: step 1/1. In terms of biological role, catalyzes the reversible adenylation of nicotinate mononucleotide (NaMN) to nicotinic acid adenine dinucleotide (NaAD). This is Probable nicotinate-nucleotide adenylyltransferase from Xylella fastidiosa (strain M23).